Reading from the N-terminus, the 428-residue chain is Enolase (428 aa).

A (2R)-2-phosphoglycerate-binding site is contributed by Gln167. The active-site Proton donor is Glu209. Residues Asp246, Glu289, and Asp316 each contribute to the Mg(2+) site. Positions 341, 370, 371, and 392 each coordinate (2R)-2-phosphoglycerate. Lys341 functions as the Proton acceptor in the catalytic mechanism.

Belongs to the enolase family. In terms of assembly, component of the RNA degradosome, a multiprotein complex involved in RNA processing and mRNA degradation. It depends on Mg(2+) as a cofactor.

It localises to the cytoplasm. It is found in the secreted. Its subcellular location is the cell surface. It carries out the reaction (2R)-2-phosphoglycerate = phosphoenolpyruvate + H2O. It participates in carbohydrate degradation; glycolysis; pyruvate from D-glyceraldehyde 3-phosphate: step 4/5. Its function is as follows. Catalyzes the reversible conversion of 2-phosphoglycerate (2-PG) into phosphoenolpyruvate (PEP). It is essential for the degradation of carbohydrates via glycolysis. The sequence is that of Enolase from Saccharophagus degradans (strain 2-40 / ATCC 43961 / DSM 17024).